The primary structure comprises 525 residues: MIFRSVSNTDFRARVRTLLLAGSTALAFVAAPVWAFSIDDVASKAKDLAGDKYSAPTSNLPSEFSEMKFADYQQIRFINERAYWGKLKTPFKLSFYHQGMHFDTPVKINEVTATTVKPIKYDRTKFDFGSLKFDENATKDLGYAGFRVLYPINQADKQDEIATFLGASYFRVVGKGQVYGLSARGLAIDTALPSGEEFPRFREFWIERPKAQDKQLVIYALLDSPRATGAYRFVLRPGKDAVMDVQARVFLREKVSKLGLAPLTSMYLFGSNQPSEQHNFRPELHDSSGLQIHAGNGEWLWRPLNNPKHLSVSTFSVENPKGFGLLQRGREFSRYEDLDDRYDLRPSAWIEPKGDWGKGTVELVEIPTPDETNDNIVAFWNPETQPEVGKPLDFAYRLHWTMDEDELHDPKSSWVKQTMRSVGDVKQKNLIRQQDGSTALVVDFEGPALKDLAPDAPVTTQVSTDSNAEVVENSLRYNPVLKGWRLTLRIKVKDPKKPVEMRAALVDEAQKPLSETWSYQLPADE.

The signal sequence occupies residues 1 to 35 (MIFRSVSNTDFRARVRTLLLAGSTALAFVAAPVWA).

Belongs to the OpgD/OpgG family.

It localises to the periplasm. It participates in glycan metabolism; osmoregulated periplasmic glucan (OPG) biosynthesis. Functionally, involved in the biosynthesis of osmoregulated periplasmic glucans (OPGs). This Pseudomonas paraeruginosa (strain DSM 24068 / PA7) (Pseudomonas aeruginosa (strain PA7)) protein is Glucans biosynthesis protein G.